A 311-amino-acid polypeptide reads, in one-letter code: tRNA pseudouridine synthase B (311 aa).

Residue aspartate 49 is the Nucleophile of the active site.

The protein belongs to the pseudouridine synthase TruB family. Type 1 subfamily.

It carries out the reaction uridine(55) in tRNA = pseudouridine(55) in tRNA. Its function is as follows. Responsible for synthesis of pseudouridine from uracil-55 in the psi GC loop of transfer RNAs. This chain is tRNA pseudouridine synthase B, found in Rhizobium meliloti (strain 1021) (Ensifer meliloti).